A 518-amino-acid polypeptide reads, in one-letter code: Probable portal protein (518 aa).

The segment at K492 to D518 is disordered.

It belongs to the siphoviridae portal protein family. As to quaternary structure, homododecamer. Interacts with the terminase complex composed of two small and one large terminase subunits.

The protein resides in the virion. Functionally, forms the portal vertex of the capsid. This portal plays critical roles in head assembly, genome packaging, neck/tail attachment, and genome ejection. The portal protein multimerizes as a single ring-shaped homododecamer arranged around a central channel. Binds to the terminase subunits to form the packaging machine. The chain is Probable portal protein from Vreelandella aquamarina (Bacteriophage phiHAP-1).